The chain runs to 231 residues: Adenosine 5'-phosphosulfate reductase (231 aa).

Residues Cys-118, Cys-119, Cys-201, and Cys-204 each coordinate [4Fe-4S] cluster. The active-site Nucleophile; cysteine thiosulfonate intermediate is Cys-227.

Belongs to the PAPS reductase family. CysH subfamily. [4Fe-4S] cluster serves as cofactor.

Its subcellular location is the cytoplasm. It carries out the reaction [thioredoxin]-disulfide + sulfite + AMP + 2 H(+) = adenosine 5'-phosphosulfate + [thioredoxin]-dithiol. Its pathway is sulfur metabolism; hydrogen sulfide biosynthesis; sulfite from sulfate. Its function is as follows. Catalyzes the formation of sulfite from adenosine 5'-phosphosulfate (APS) using thioredoxin as an electron donor. The sequence is that of Adenosine 5'-phosphosulfate reductase from Halalkalibacterium halodurans (strain ATCC BAA-125 / DSM 18197 / FERM 7344 / JCM 9153 / C-125) (Bacillus halodurans).